The chain runs to 152 residues: UPF0225 protein YchJ (152 aa).

The protein belongs to the UPF0225 family.

This is UPF0225 protein YchJ from Escherichia coli O6:K15:H31 (strain 536 / UPEC).